Consider the following 227-residue polypeptide: MSIFLVTGTSTDVGKTVVTAALASVALQSGKSVAVLKPAQTGVDVDGAGDLAEIERLTGGGVTLVELARYPEPLAPDTAARRSGLPLLALDDVVRVARDLDTTHDLTLIEGAGGLLVRLGVDGFTARDLAAALAAPVVLVVASGLGTLNHTALTVEALGASGVECAGLVIGSWPQEPDLAERCNREDLVSVSGVPLLGLMPAGSGSESVQEFAQTAWGALGKSPLAI.

12 to 17 (DVGKTV) is an ATP binding site. Thr-16 contacts Mg(2+). Lys-37 is a catalytic residue. Thr-41 contacts substrate. ATP-binding positions include Asp-50, 110-113 (EGAG), 171-172 (GS), and 201-203 (PAG). The Mg(2+) site is built by Asp-50 and Glu-110.

This sequence belongs to the dethiobiotin synthetase family. As to quaternary structure, homodimer. Mg(2+) is required as a cofactor.

It is found in the cytoplasm. The enzyme catalyses (7R,8S)-7,8-diammoniononanoate + CO2 + ATP = (4R,5S)-dethiobiotin + ADP + phosphate + 3 H(+). It participates in cofactor biosynthesis; biotin biosynthesis; biotin from 7,8-diaminononanoate: step 1/2. In terms of biological role, catalyzes a mechanistically unusual reaction, the ATP-dependent insertion of CO2 between the N7 and N8 nitrogen atoms of 7,8-diaminopelargonic acid (DAPA, also called 7,8-diammoniononanoate) to form a ureido ring. The protein is ATP-dependent dethiobiotin synthetase BioD of Rhodococcus erythropolis (strain PR4 / NBRC 100887).